Reading from the N-terminus, the 347-residue chain is Peroxidase C2 (347 aa).

A signal peptide spans 1–24 (MHSSSSLIKLGFLLLLLNVSLSHA). 4 disulfides stabilise this stretch: C35–C115, C68–C73, C121–C325, and C201–C233. Catalysis depends on H66, which acts as the Proton acceptor. Residues D67, V70, G72, D74, and S76 each coordinate Ca(2+). A glycan (N-linked (GlcNAc...) asparagine) is linked at N81. P163 contributes to the substrate binding site. H194 serves as a coordination point for heme b. T195 contacts Ca(2+). N-linked (GlcNAc...) asparagine glycosylation is found at N210 and N238. Residues D246, T249, and D254 each coordinate Ca(2+).

It belongs to the peroxidase family. Classical plant (class III) peroxidase subfamily. It depends on Ca(2+) as a cofactor. The cofactor is heme b.

Its subcellular location is the secreted. It localises to the vacuole. It carries out the reaction 2 a phenolic donor + H2O2 = 2 a phenolic radical donor + 2 H2O. Removal of H(2)O(2), oxidation of toxic reductants, biosynthesis and degradation of lignin, suberization, auxin catabolism, response to environmental stresses such as wounding, pathogen attack and oxidative stress. These functions might be dependent on each isozyme/isoform in each plant tissue. The polypeptide is Peroxidase C2 (PRXC2) (Armoracia rusticana (Horseradish)).